Reading from the N-terminus, the 174-residue chain is Gamma-crystallin A (174 aa).

2 Beta/gamma crystallin 'Greek key' domains span residues glycine 2–serine 40 and glycine 41–proline 83. Positions tyrosine 84–serine 87 are connecting peptide. Beta/gamma crystallin 'Greek key' domains are found at residues histidine 88 to glutamate 128 and glycine 129 to methionine 171.

It belongs to the beta/gamma-crystallin family.

Functionally, crystallins are the dominant structural components of the vertebrate eye lens. The chain is Gamma-crystallin A (Cryga) from Mus musculus (Mouse).